The following is a 128-amino-acid chain: Glycine cleavage system H protein (128 aa).

The Lipoyl-binding domain occupies 25 to 107; the sequence is TVRVGITDFA…YEGGWLFEIT (83 aa). Lys66 is subject to N6-lipoyllysine.

The protein belongs to the GcvH family. As to quaternary structure, the glycine cleavage system is composed of four proteins: P, T, L and H. (R)-lipoate serves as cofactor.

The glycine cleavage system catalyzes the degradation of glycine. The H protein shuttles the methylamine group of glycine from the P protein to the T protein. The chain is Glycine cleavage system H protein from Micrococcus luteus (strain ATCC 4698 / DSM 20030 / JCM 1464 / CCM 169 / CCUG 5858 / IAM 1056 / NBRC 3333 / NCIMB 9278 / NCTC 2665 / VKM Ac-2230) (Micrococcus lysodeikticus).